We begin with the raw amino-acid sequence, 298 residues long: GTPase Era (298 aa).

The region spanning 8-176 (HCGSVAVIGR…VRDVLALLPE (169 aa)) is the Era-type G domain. The interval 16–23 (GRPNVGKS) is G1. 16-23 (GRPNVGKS) contacts GTP. The G2 stretch occupies residues 42–46 (QTTRH). The tract at residues 63–66 (DTPG) is G3. GTP-binding positions include 63-67 (DTPGL) and 125-128 (NKID). The segment at 125 to 128 (NKID) is G4. The segment at 155–157 (ISA) is G5. A KH type-2 domain is found at 199-283 (VREQLMRQLG…FLETWVRVRE (85 aa)).

It belongs to the TRAFAC class TrmE-Era-EngA-EngB-Septin-like GTPase superfamily. Era GTPase family. In terms of assembly, monomer.

Its subcellular location is the cytoplasm. The protein resides in the cell inner membrane. In terms of biological role, an essential GTPase that binds both GDP and GTP, with rapid nucleotide exchange. Plays a role in 16S rRNA processing and 30S ribosomal subunit biogenesis and possibly also in cell cycle regulation and energy metabolism. This chain is GTPase Era, found in Stenotrophomonas maltophilia (strain R551-3).